The primary structure comprises 40 residues: Photosystem II reaction center protein J (40 aa).

Residues 8 to 28 traverse the membrane as a helical segment; that stretch reads IPLWLIGTVAGILIIGLLGVF.

Belongs to the PsbJ family. As to quaternary structure, PSII is composed of 1 copy each of membrane proteins PsbA, PsbB, PsbC, PsbD, PsbE, PsbF, PsbH, PsbI, PsbJ, PsbK, PsbL, PsbM, PsbT, PsbX, PsbY, PsbZ, Psb30/Ycf12, at least 3 peripheral proteins of the oxygen-evolving complex and a large number of cofactors. It forms dimeric complexes.

The protein resides in the plastid. Its subcellular location is the chloroplast thylakoid membrane. Its function is as follows. One of the components of the core complex of photosystem II (PSII). PSII is a light-driven water:plastoquinone oxidoreductase that uses light energy to abstract electrons from H(2)O, generating O(2) and a proton gradient subsequently used for ATP formation. It consists of a core antenna complex that captures photons, and an electron transfer chain that converts photonic excitation into a charge separation. In Nandina domestica (Heavenly bamboo), this protein is Photosystem II reaction center protein J.